We begin with the raw amino-acid sequence, 372 residues long: Aminomethyltransferase (372 aa).

This sequence belongs to the GcvT family. In terms of assembly, the glycine cleavage system is composed of four proteins: P, T, L and H.

It catalyses the reaction N(6)-[(R)-S(8)-aminomethyldihydrolipoyl]-L-lysyl-[protein] + (6S)-5,6,7,8-tetrahydrofolate = N(6)-[(R)-dihydrolipoyl]-L-lysyl-[protein] + (6R)-5,10-methylene-5,6,7,8-tetrahydrofolate + NH4(+). The glycine cleavage system catalyzes the degradation of glycine. The sequence is that of Aminomethyltransferase from Synechocystis sp. (strain ATCC 27184 / PCC 6803 / Kazusa).